A 291-amino-acid polypeptide reads, in one-letter code: Nucleotide-binding protein Athe_0320 (291 aa).

9-16 (GMSGAGKS) serves as a coordination point for ATP. 60-63 (DIRG) is a GTP binding site.

This sequence belongs to the RapZ-like family.

Displays ATPase and GTPase activities. This is Nucleotide-binding protein Athe_0320 from Caldicellulosiruptor bescii (strain ATCC BAA-1888 / DSM 6725 / KCTC 15123 / Z-1320) (Anaerocellum thermophilum).